The primary structure comprises 306 residues: Aspartate carbamoyltransferase catalytic subunit (306 aa).

Residues arginine 56 and threonine 57 each coordinate carbamoyl phosphate. Lysine 84 is an L-aspartate binding site. Arginine 106, histidine 136, and glutamine 139 together coordinate carbamoyl phosphate. The L-aspartate site is built by arginine 169 and arginine 221. Residues alanine 262 and proline 263 each coordinate carbamoyl phosphate.

Belongs to the aspartate/ornithine carbamoyltransferase superfamily. ATCase family. Heterododecamer (2C3:3R2) of six catalytic PyrB chains organized as two trimers (C3), and six regulatory PyrI chains organized as three dimers (R2).

It carries out the reaction carbamoyl phosphate + L-aspartate = N-carbamoyl-L-aspartate + phosphate + H(+). It participates in pyrimidine metabolism; UMP biosynthesis via de novo pathway; (S)-dihydroorotate from bicarbonate: step 2/3. Its function is as follows. Catalyzes the condensation of carbamoyl phosphate and aspartate to form carbamoyl aspartate and inorganic phosphate, the committed step in the de novo pyrimidine nucleotide biosynthesis pathway. The polypeptide is Aspartate carbamoyltransferase catalytic subunit (Streptococcus gordonii (strain Challis / ATCC 35105 / BCRC 15272 / CH1 / DL1 / V288)).